Reading from the N-terminus, the 205-residue chain is Thiamine-phosphate synthase (205 aa).

Residues Gln-36–Lys-40 and Asp-68 contribute to the 4-amino-2-methyl-5-(diphosphooxymethyl)pyrimidine site. The Mg(2+) site is built by Asp-69 and Asp-88. 4-amino-2-methyl-5-(diphosphooxymethyl)pyrimidine is bound at residue Ser-106. Ser-132 to Thr-134 is a binding site for 2-[(2R,5Z)-2-carboxy-4-methylthiazol-5(2H)-ylidene]ethyl phosphate. Lys-135 lines the 4-amino-2-methyl-5-(diphosphooxymethyl)pyrimidine pocket. Residues Gly-162 and Ile-182–Ser-183 each bind 2-[(2R,5Z)-2-carboxy-4-methylthiazol-5(2H)-ylidene]ethyl phosphate.

The protein belongs to the thiamine-phosphate synthase family. It depends on Mg(2+) as a cofactor.

The enzyme catalyses 2-[(2R,5Z)-2-carboxy-4-methylthiazol-5(2H)-ylidene]ethyl phosphate + 4-amino-2-methyl-5-(diphosphooxymethyl)pyrimidine + 2 H(+) = thiamine phosphate + CO2 + diphosphate. The catalysed reaction is 2-(2-carboxy-4-methylthiazol-5-yl)ethyl phosphate + 4-amino-2-methyl-5-(diphosphooxymethyl)pyrimidine + 2 H(+) = thiamine phosphate + CO2 + diphosphate. It carries out the reaction 4-methyl-5-(2-phosphooxyethyl)-thiazole + 4-amino-2-methyl-5-(diphosphooxymethyl)pyrimidine + H(+) = thiamine phosphate + diphosphate. It functions in the pathway cofactor biosynthesis; thiamine diphosphate biosynthesis; thiamine phosphate from 4-amino-2-methyl-5-diphosphomethylpyrimidine and 4-methyl-5-(2-phosphoethyl)-thiazole: step 1/1. Condenses 4-methyl-5-(beta-hydroxyethyl)thiazole monophosphate (THZ-P) and 2-methyl-4-amino-5-hydroxymethyl pyrimidine pyrophosphate (HMP-PP) to form thiamine monophosphate (TMP). In Caldivirga maquilingensis (strain ATCC 700844 / DSM 13496 / JCM 10307 / IC-167), this protein is Thiamine-phosphate synthase.